Consider the following 137-residue polypeptide: 2-iminobutanoate/2-iminopropanoate deaminase (137 aa).

Position 2 is an N-acetylserine (Ser2). N6-succinyllysine is present on residues Lys13 and Lys67. A Phosphothreonine modification is found at Thr74. Residue Ser136 is modified to Phosphoserine.

The protein belongs to the RutC family. Homotrimer. Interacts with YTHDF2.

The protein resides in the cytoplasm. It localises to the nucleus. It is found in the peroxisome. The protein localises to the mitochondrion. It carries out the reaction 2-iminobutanoate + H2O = 2-oxobutanoate + NH4(+). It catalyses the reaction 2-iminopropanoate + H2O = pyruvate + NH4(+). Its function is as follows. Catalyzes the hydrolytic deamination of enamine/imine intermediates that form during the course of normal metabolism. May facilitate the release of ammonia from these potentially toxic reactive metabolites, reducing their impact on cellular components. It may act on enamine/imine intermediates formed by several types of pyridoxal-5'-phosphate-dependent dehydratases including L-threonine dehydratase. Functionally, also promotes endoribonucleolytic cleavage of some transcripts by promoting recruitment of the ribonuclease P/MRP complex. Acts by bridging YTHDF2 and the ribonuclease P/MRP complex. RIDA/HRSP12 binds to N6-methyladenosine (m6A)-containing mRNAs containing a 5'-GGUUC-3' motif: cooperative binding of RIDA/HRSP12 and YTHDF2 to such transcripts lead to recruitment of the ribonuclease P/MRP complex and subsequent endoribonucleolytic cleavage. The chain is 2-iminobutanoate/2-iminopropanoate deaminase from Bos taurus (Bovine).